The chain runs to 360 residues: Phosphoserine aminotransferase (360 aa).

Arginine 41 provides a ligand contact to L-glutamate. 4 residues coordinate pyridoxal 5'-phosphate: tryptophan 101, threonine 152, aspartate 172, and glutamine 195. Lysine 196 carries the post-translational modification N6-(pyridoxal phosphate)lysine. 237–238 (NT) serves as a coordination point for pyridoxal 5'-phosphate.

This sequence belongs to the class-V pyridoxal-phosphate-dependent aminotransferase family. SerC subfamily. Homodimer. Pyridoxal 5'-phosphate serves as cofactor.

The protein resides in the cytoplasm. It catalyses the reaction O-phospho-L-serine + 2-oxoglutarate = 3-phosphooxypyruvate + L-glutamate. The enzyme catalyses 4-(phosphooxy)-L-threonine + 2-oxoglutarate = (R)-3-hydroxy-2-oxo-4-phosphooxybutanoate + L-glutamate. The protein operates within amino-acid biosynthesis; L-serine biosynthesis; L-serine from 3-phospho-D-glycerate: step 2/3. Its pathway is cofactor biosynthesis; pyridoxine 5'-phosphate biosynthesis; pyridoxine 5'-phosphate from D-erythrose 4-phosphate: step 3/5. Functionally, catalyzes the reversible conversion of 3-phosphohydroxypyruvate to phosphoserine and of 3-hydroxy-2-oxo-4-phosphonooxybutanoate to phosphohydroxythreonine. This is Phosphoserine aminotransferase from Burkholderia multivorans (strain ATCC 17616 / 249).